The primary structure comprises 103 residues: Hexon-interlacing protein (103 aa).

Residues 72 to 99 (LDELKIQVAAMQNSVTAIQREVNDLKQR) adopt a coiled-coil conformation.

Belongs to the adenoviridae hexon-interlacing protein family. As to quaternary structure, homotrimer. Interacts with hexon protein; this interaction tethers the hexons together. Self-interacts with adjacent proteins. Interacts with kinesin light chain KLC1; this interaction leads to capsid disruption at the nuclear pore complex during virus entry into host cell.

It is found in the virion. Its subcellular location is the host nucleus. Its function is as follows. Structural component of the virion that acts as a cement protein on the capsid exterior and forms triskelion structures consisting of three molecules that stabilize three hexon trimers at the center of each icosahedral facet and fixes the peripentonal hexons. Dispensable for assembly. During virus entry, recruits the anterograde motor kinesin-1 to the capsid docked at the nuclear pore complex thereby subjecting the docked capsid to a pulling force. The resulting tension leads to capsid disruption, dispersion of capsid fragments toward cell periphery and eventually viral DNA entry into the host nucleus. The protein is Hexon-interlacing protein of Canis lupus familiaris (Dog).